The chain runs to 1038 residues: Protein transport protein SEC24 A (1038 aa).

The segment at 1–247 is disordered; the sequence is MGTENQGYPN…PPHTGGFAQR (247 aa). The span at 22-33 shows a compositional bias: pro residues; it reads SAPPPGIPPQSG. The Zn(2+) site is built by cysteine 371, cysteine 374, cysteine 393, and cysteine 396. The zinc finger-like stretch occupies residues 371–396; that stretch reads CRRCRTYVNPFVTFTDSGRKWRCNIC.

Belongs to the SEC23/SEC24 family. SEC24 subfamily. Component of the coat protein complex II (COPII), composed of at least five proteins: the Sec23/24 complex, the Sec13/31 complex and Sar1. Interacts with SEC221, SEC23E/SEC23A, SEC23B, SEC23G/SEC23C and SEC23F/SEC23D. As to quaternary structure, (Microbial infection) Interacts with turnip mosaic virus (TuMV) 6K2 in COPII-coated vesicles. As to expression, mainly expressed in pollen, leaves, inflorescences, roots and stems, and, to a lower extent, in cotyledons, petioles and hypocotyls.

It localises to the cytoplasmic vesicle. The protein resides in the COPII-coated vesicle membrane. It is found in the endoplasmic reticulum membrane. Its subcellular location is the golgi apparatus membrane. The protein localises to the cytoplasm. It localises to the cytosol. Essential protein. Component of the coat protein complex II (COPII), that covers ER-derived vesicles involved in transport from the endoplasmic reticulum to the Golgi apparatus. COPII is composed of at least five proteins: the SEC23/24 complex, the SEC13/31 complex, and the protein SAR1. Acts in the cytoplasm to promote the transport of secretory, plasma membrane, and vacuolar proteins from the endoplasmic reticulum to the Golgi complex. Involved in maintaining the dynamic identity of organelles of the early secretory pathway. Regulates cell size patterning, and prevents CDKA;1-, DEK1- and ACR4-dependent endoreduplication and giant cells formation in sepals. Required for male gametophytes (pollen grains) development and transmission. In terms of biological role, (Microbial infection) Contributes to viral systemic infection of turnip mosaic virus (TuMV) by triggering the formation of host endoplasmic reticulum (ER)-derived viral vesicles that carry the viral RNA (vRNA) to plasmodesmata for cell-to-cell viral movement. This Arabidopsis thaliana (Mouse-ear cress) protein is Protein transport protein SEC24 A.